The sequence spans 394 residues: Glutamyl-tRNA reductase (394 aa).

Residues threonine 45 to arginine 48, serine 99, glutamate 104 to glutamine 106, and glutamine 110 each bind substrate. Cysteine 46 functions as the Nucleophile in the catalytic mechanism. Glycine 175–glycine 180 is a binding site for NADP(+).

Belongs to the glutamyl-tRNA reductase family. Homodimer.

The catalysed reaction is (S)-4-amino-5-oxopentanoate + tRNA(Glu) + NADP(+) = L-glutamyl-tRNA(Glu) + NADPH + H(+). It functions in the pathway porphyrin-containing compound metabolism; protoporphyrin-IX biosynthesis; 5-aminolevulinate from L-glutamyl-tRNA(Glu): step 1/2. Catalyzes the NADPH-dependent reduction of glutamyl-tRNA(Glu) to glutamate 1-semialdehyde (GSA). The protein is Glutamyl-tRNA reductase of Caldicellulosiruptor saccharolyticus (strain ATCC 43494 / DSM 8903 / Tp8T 6331).